Consider the following 177-residue polypeptide: 3-hydroxydecanoyl-[acyl-carrier-protein] dehydratase (177 aa).

Residue His-71 is part of the active site.

This sequence belongs to the thioester dehydratase family. FabA subfamily. As to quaternary structure, homodimer.

It localises to the cytoplasm. The enzyme catalyses a (3R)-hydroxyacyl-[ACP] = a (2E)-enoyl-[ACP] + H2O. The catalysed reaction is (3R)-hydroxydecanoyl-[ACP] = (2E)-decenoyl-[ACP] + H2O. It catalyses the reaction (2E)-decenoyl-[ACP] = (3Z)-decenoyl-[ACP]. It functions in the pathway lipid metabolism; fatty acid biosynthesis. In terms of biological role, necessary for the introduction of cis unsaturation into fatty acids. Catalyzes the dehydration of (3R)-3-hydroxydecanoyl-ACP to E-(2)-decenoyl-ACP and then its isomerization to Z-(3)-decenoyl-ACP. Can catalyze the dehydratase reaction for beta-hydroxyacyl-ACPs with saturated chain lengths up to 16:0, being most active on intermediate chain length. This Wigglesworthia glossinidia brevipalpis protein is 3-hydroxydecanoyl-[acyl-carrier-protein] dehydratase.